We begin with the raw amino-acid sequence, 446 residues long: MSAPAVSQGRNVVVIGTQWGDEGKGKIVDWLTDHAQGVVRFQGGHNAGHTLIIGGKKTILRLIPSGIMRDGVACYIGNGVVLSPEALFKEIDELESAGVQVQNRLRISEATNLILPYHVAIDKAREAKRGAAKIGTTGRGIGPAYEDKVARRGLRVQDLFDPAYFAERLRENLDFHNFVLTQYLNHPALDFQQTLDEMLSYAGRLAPMVTDVSAELFAANAAGKNLMFEGAQGTLLDIDHGTYPFVTSSNCVAGNAAAGAGVGPGQLHYILGITKAYCTRVGSGPFPSELYDADNPARQDPIGVRLANVGKEFGSVTGRPRRTGWLDAAALRRAIQINGVSGLCMTKLDVLDGLETLKLCVGYMLDGKQIDILPRGSDAVARCQPIYEEFPGWNTSTFGLKEWDALPQTAQAYLKRVEEVAGIPIAMISTGPDRDETILLRHPYKD.

GTP is bound by residues 20 to 26 and 48 to 50; these read GDEGKGK and GHT. The active-site Proton acceptor is Asp21. Mg(2+) contacts are provided by Asp21 and Gly48. IMP is bound by residues 21–24, 46–49, Thr137, Arg151, Gln232, Thr247, and Arg319; these read DEGK and NAGH. His49 serves as the catalytic Proton donor. 315 to 321 is a binding site for substrate; the sequence is SVTGRPR. Residues Arg321, 347-349, and 429-431 each bind GTP; these read KLD and STG.

The protein belongs to the adenylosuccinate synthetase family. In terms of assembly, homodimer. Mg(2+) is required as a cofactor.

The protein localises to the cytoplasm. The catalysed reaction is IMP + L-aspartate + GTP = N(6)-(1,2-dicarboxyethyl)-AMP + GDP + phosphate + 2 H(+). It participates in purine metabolism; AMP biosynthesis via de novo pathway; AMP from IMP: step 1/2. In terms of biological role, plays an important role in the de novo pathway of purine nucleotide biosynthesis. Catalyzes the first committed step in the biosynthesis of AMP from IMP. The protein is Adenylosuccinate synthetase of Ralstonia pickettii (strain 12J).